Consider the following 564-residue polypeptide: Probable cysteine--tRNA ligase, mitochondrial (564 aa).

Cys-78 lines the Zn(2+) pocket. Residue Gly-79 participates in L-cysteine binding. Positions 80–90 (PTVYDHAHLGH) match the 'HIGH' region motif. Residue Thr-119 coordinates L-cysteine. The 'KIIK' region signature appears at 124–127 (KIIK). Zn(2+) contacts are provided by Cys-257, His-282, and Glu-286. An L-cysteine-binding site is contributed by His-282. Positions 317 to 321 (KMSKS) match the 'KMSKS' region motif. Lys-320 lines the ATP pocket.

The protein belongs to the class-I aminoacyl-tRNA synthetase family. Zn(2+) serves as cofactor.

It localises to the mitochondrion. It catalyses the reaction tRNA(Cys) + L-cysteine + ATP = L-cysteinyl-tRNA(Cys) + AMP + diphosphate. It carries out the reaction 2 L-cysteine = S-sulfanyl-L-cysteine + L-alanine. The enzyme catalyses S-sulfanyl-L-cysteine + L-cysteine = S-disulfanyl-L-cysteine + L-alanine. The catalysed reaction is S-sulfanyl-L-cysteine + tRNA(Cys) + ATP = (S)-sulfanyl-L-cysteinyl-tRNA(Cys) + AMP + diphosphate. It catalyses the reaction S-disulfanyl-L-cysteine + tRNA(Cys) + ATP = (S)-disulfanyl-L-cysteinyl-tRNA(Cys) + AMP + diphosphate. Its function is as follows. Mitochondrial cysteine-specific aminoacyl-tRNA synthetase that catalyzes the ATP-dependent ligation of cysteine to tRNA(Cys). Functionally, in addition to its role as an aminoacyl-tRNA synthetase, has also cysteine persulfide synthase activity. Produces reactive persulfide species such as cysteine persulfide (CysSSH) from substrate cysteine and mediate direct incorporation of CysSSH into proteins during translations, resulting in protein persulfides and polysulfides. CysSSHs behave as potent antioxidants and cellular protectants. This is Probable cysteine--tRNA ligase, mitochondrial from Homo sapiens (Human).